A 562-amino-acid polypeptide reads, in one-letter code: Putative transport protein ECA2683 (562 aa).

6 helical membrane-spanning segments follow: residues 8-28 (LLNG…LCLG), 32-52 (LGPV…LLGQ), 66-86 (FMLF…SIFF), 93-113 (FMLA…LGKL), 116-136 (WGIG…PVLV), and 158-178 (HLSL…IFGA). RCK C-terminal domains lie at 202–288 (LDVD…NFRD) and 290–373 (KEVF…RIGF). The next 5 helical transmembrane spans lie at 383 to 403 (LLAF…TIQF), 406 to 426 (FTFG…LGFL), 447 to 467 (FGLM…INSS), 478 to 498 (SGLI…AYVL), and 537 to 557 (GTYA…VVIW).

Belongs to the AAE transporter (TC 2.A.81) family. YbjL subfamily.

Its subcellular location is the cell membrane. This chain is Putative transport protein ECA2683, found in Pectobacterium atrosepticum (strain SCRI 1043 / ATCC BAA-672) (Erwinia carotovora subsp. atroseptica).